An 89-amino-acid polypeptide reads, in one-letter code: Insulin (89 aa).

Intrachain disulfides connect Cys7-Cys75, Cys19-Cys88, and Cys74-Cys79. The propeptide at 33-66 is c peptide; that stretch reads DVGPLSAFRDLEPPLDTEMEDRFPYRQQLAGSKM.

This sequence belongs to the insulin family. In terms of assembly, heterodimer of a B chain and an A chain linked by two disulfide bonds.

The protein localises to the secreted. Its function is as follows. Insulin decreases blood glucose concentration. It increases cell permeability to monosaccharides, amino acids and fatty acids. It accelerates glycolysis, the pentose phosphate cycle, and glycogen synthesis in liver. This Callorhinchus milii (Ghost shark) protein is Insulin (ins).